A 291-amino-acid chain; its full sequence is Quinol oxidase subunit 2 (291 aa).

The signal sequence occupies residues 1 to 28 (MQLKKAFWKLASLLPLSLLLFLGGCDKK). A run of 2 helical transmembrane segments spans residues 49–69 (SFLL…VILI) and 91–111 (LEII…IPTV).

It belongs to the cytochrome c oxidase subunit 2 family.

The protein resides in the cell membrane. It catalyses the reaction 2 a quinol + O2 = 2 a quinone + 2 H2O. Catalyzes quinol oxidation with the concomitant reduction of oxygen to water. Subunit II transfers the electrons from a quinol to the binuclear center of the catalytic subunit I. The protein is Quinol oxidase subunit 2 of Bacillus anthracis.